A 42-amino-acid chain; its full sequence is uncharacterized protein (42 aa).

Residues 5-27 (FLHTNITIIPHSVLYVSLSYYII) form a helical membrane-spanning segment.

It localises to the membrane. This is an uncharacterized protein from Saccharomyces cerevisiae (strain ATCC 204508 / S288c) (Baker's yeast).